Here is a 472-residue protein sequence, read N- to C-terminus: Uronate isomerase (472 aa).

It belongs to the metallo-dependent hydrolases superfamily. Uronate isomerase family.

The catalysed reaction is D-glucuronate = D-fructuronate. It carries out the reaction aldehydo-D-galacturonate = keto-D-tagaturonate. The protein operates within carbohydrate metabolism; pentose and glucuronate interconversion. The protein is Uronate isomerase of Xanthomonas oryzae pv. oryzae (strain MAFF 311018).